Consider the following 121-residue polypeptide: Small ribosomal subunit protein uS13 (121 aa).

The interval 91-121 is disordered; that stretch reads HRRGLPVRGQNTKNNARTRKGPRKTVANKKK. Positions 106–121 are enriched in basic residues; that stretch reads ARTRKGPRKTVANKKK.

Belongs to the universal ribosomal protein uS13 family. As to quaternary structure, part of the 30S ribosomal subunit. Forms a loose heterodimer with protein S19. Forms two bridges to the 50S subunit in the 70S ribosome.

In terms of biological role, located at the top of the head of the 30S subunit, it contacts several helices of the 16S rRNA. In the 70S ribosome it contacts the 23S rRNA (bridge B1a) and protein L5 of the 50S subunit (bridge B1b), connecting the 2 subunits; these bridges are implicated in subunit movement. Contacts the tRNAs in the A and P-sites. The polypeptide is Small ribosomal subunit protein uS13 (Lysinibacillus sphaericus (strain C3-41)).